A 250-amino-acid polypeptide reads, in one-letter code: GPI-anchored hemophore PGA10 (250 aa).

The signal sequence occupies residues 1–20; that stretch reads MMSFSLLSIVSIALAATVSA. In terms of domain architecture, CFEM spans 26 to 137; sequence NAYTAYPSVA…DALAKAANAA (112 aa). 4 disulfides stabilise this stretch: C54–C94, C58–C89, C68–C75, and C77–C110. D72 contributes to the heme binding site. The disordered stretch occupies residues 165–219; it reads STSHESKVAETSVAQQTASTEKSSAAETSRAKETSKAEESSKAEETSVAQSSSSA. Positions 178–192 are enriched in low complexity; it reads AQQTASTEKSSAAET. Over residues 193–209 the composition is skewed to basic and acidic residues; that stretch reads SRAKETSKAEESSKAEE. The segment covering 210 to 219 has biased composition (low complexity); it reads TSVAQSSSSA. N230 carries GPI-anchor amidated asparagine lipidation. Positions 231–250 are cleaved as a propeptide — removed in mature form; that stretch reads AGNMPVIAIGGVIAAFAALI.

It belongs to the RBT5 family. The GPI-anchor is attached to the protein in the endoplasmic reticulum and serves to target the protein to the cell surface. There, the glucosamine-inositol phospholipid moiety is cleaved off and the GPI-modified mannoprotein is covalently attached via its lipidless GPI glycan remnant to the 1,6-beta-glucan of the outer cell wall layer. In terms of processing, mannosylated.

The protein localises to the secreted. Its subcellular location is the cell wall. The protein resides in the cell membrane. Functionally, heme-binding protein involved in heme-iron utilization. The ability to acquire iron from host tissues is a major virulence factor of pathogenic microorganisms. Involved in biofilm formation. The protein is GPI-anchored hemophore PGA10 of Candida albicans (strain SC5314 / ATCC MYA-2876) (Yeast).